Here is a 79-residue protein sequence, read N- to C-terminus: SGHLLLLLGLLTLWAELTPVSGAAKYCKLPLRIGPCKRKIPSFYYKWKAKQCLPFDYSGCGGNANRFKTIEECRRTCVG.

The region spanning 27–77 (CKLPLRIGPCKRKIPSFYYKWKAKQCLPFDYSGCGGNANRFKTIEECRRTC) is the BPTI/Kunitz inhibitor domain. 3 disulfides stabilise this stretch: cysteine 27-cysteine 77, cysteine 36-cysteine 60, and cysteine 52-cysteine 73.

It belongs to the venom Kunitz-type family. As to expression, expressed by the venom gland.

It is found in the secreted. Functionally, serine protease inhibitor homolog that selectively blocks voltage-gated potassium channels homooligomer Kv1.1/KCNA1 (EC(50)=0.6 nM) and Kv1.1-containing heterooligomer. The protein is Kunitz-type serine protease inhibitor homolog dendrotoxin K of Dendroaspis polylepis polylepis (Black mamba).